The following is a 490-amino-acid chain: Ribulose bisphosphate carboxylase large chain (490 aa).

Residues asparagine 127 and threonine 177 each coordinate substrate. The active-site Proton acceptor is lysine 179. Lysine 181 lines the substrate pocket. Lysine 205, aspartate 207, and glutamate 208 together coordinate Mg(2+). Lysine 205 carries the post-translational modification N6-carboxylysine. The active-site Proton acceptor is the histidine 297. Residues arginine 298, histidine 330, and serine 382 each contribute to the substrate site.

Belongs to the RuBisCO large chain family. Type I subfamily. As to quaternary structure, heterohexadecamer of 8 large chains and 8 small chains. Mg(2+) is required as a cofactor.

Its subcellular location is the plastid. The protein localises to the chloroplast. It carries out the reaction 2 (2R)-3-phosphoglycerate + 2 H(+) = D-ribulose 1,5-bisphosphate + CO2 + H2O. The catalysed reaction is D-ribulose 1,5-bisphosphate + O2 = 2-phosphoglycolate + (2R)-3-phosphoglycerate + 2 H(+). RuBisCO catalyzes two reactions: the carboxylation of D-ribulose 1,5-bisphosphate, the primary event in carbon dioxide fixation, as well as the oxidative fragmentation of the pentose substrate in the photorespiration process. Both reactions occur simultaneously and in competition at the same active site. The protein is Ribulose bisphosphate carboxylase large chain of Cylindrotheca sp. (strain N1) (Marine diatom).